We begin with the raw amino-acid sequence, 128 residues long: Translation initiation factor 5A (128 aa).

At Lys-35 the chain carries Hypusine.

Belongs to the eIF-5A family.

The protein localises to the cytoplasm. Functionally, functions by promoting the formation of the first peptide bond. In Methanosarcina mazei (strain ATCC BAA-159 / DSM 3647 / Goe1 / Go1 / JCM 11833 / OCM 88) (Methanosarcina frisia), this protein is Translation initiation factor 5A (eif5a).